Reading from the N-terminus, the 366-residue chain is Chorismate synthase (366 aa).

Positions 48 and 54 each coordinate NADP(+). FMN-binding positions include 125–127, 238–239, Gly278, 293–297, and Arg319; these read RSS, NA, and KPTSS.

The protein belongs to the chorismate synthase family. Homotetramer. FMNH2 is required as a cofactor.

It carries out the reaction 5-O-(1-carboxyvinyl)-3-phosphoshikimate = chorismate + phosphate. Its pathway is metabolic intermediate biosynthesis; chorismate biosynthesis; chorismate from D-erythrose 4-phosphate and phosphoenolpyruvate: step 7/7. In terms of biological role, catalyzes the anti-1,4-elimination of the C-3 phosphate and the C-6 proR hydrogen from 5-enolpyruvylshikimate-3-phosphate (EPSP) to yield chorismate, which is the branch point compound that serves as the starting substrate for the three terminal pathways of aromatic amino acid biosynthesis. This reaction introduces a second double bond into the aromatic ring system. In Burkholderia cenocepacia (strain HI2424), this protein is Chorismate synthase.